Consider the following 692-residue polypeptide: Elongation factor G (692 aa).

The tr-type G domain maps to 8–282 (ENTRNIGIMA…AVIDYLPSPV (275 aa)). GTP contacts are provided by residues 17–24 (AHIDAGKT), 81–85 (DTPGH), and 135–138 (NKMD).

It belongs to the TRAFAC class translation factor GTPase superfamily. Classic translation factor GTPase family. EF-G/EF-2 subfamily.

It is found in the cytoplasm. Its function is as follows. Catalyzes the GTP-dependent ribosomal translocation step during translation elongation. During this step, the ribosome changes from the pre-translocational (PRE) to the post-translocational (POST) state as the newly formed A-site-bound peptidyl-tRNA and P-site-bound deacylated tRNA move to the P and E sites, respectively. Catalyzes the coordinated movement of the two tRNA molecules, the mRNA and conformational changes in the ribosome. The chain is Elongation factor G from Lysinibacillus sphaericus (strain C3-41).